The chain runs to 295 residues: Hepatic leukemia factor (295 aa).

Over residues 34–52 the composition is skewed to basic and acidic residues; sequence LHPEDAFSKDRDKGKKLDD. 2 disordered regions span residues 34–69 and 93–160; these read LHPEDAFSKDRDKGKKLDDGSNSPTVPQSAFLGPTL and SENG…NRNT. The bZIP domain occupies 225 to 288; that stretch reads DDKYWARRRK…GKCKNILAKY (64 aa). The basic motif stretch occupies residues 227 to 247; sequence KYWARRRKNNMAAKRSRDARR. The segment at 248–255 is leucine-zipper; that stretch reads LKENQIAI.

The protein belongs to the bZIP family. PAR subfamily. In terms of assembly, binds DNA specifically as homodimer or heterodimer with other PAR factors. Isoform HLF43 is abundant in brain, liver and kidney. Isoform HLF36 is expressed only in the liver. Both isoforms accumulate in the liver with different circadian amplitudes. Isoform HLF36 reaches peak expression levels between 8 and 12 p.m. Isoform HLF43 displays a more pronounced fluctuation through the day.

It is found in the nucleus. In Rattus norvegicus (Rat), this protein is Hepatic leukemia factor (Hlf).